The following is a 61-amino-acid chain: Cytotoxin 1 (61 aa).

4 disulfides stabilise this stretch: cysteine 3/cysteine 22, cysteine 15/cysteine 39, cysteine 43/cysteine 54, and cysteine 55/cysteine 60.

This sequence belongs to the three-finger toxin family. Short-chain subfamily. Type IB cytotoxin sub-subfamily. Expressed by the venom gland.

Its subcellular location is the secreted. Functionally, this protein lyses red blood cells and has cardiotoxic and hypotensive activities. This chain is Cytotoxin 1, found in Hemachatus haemachatus (Rinkhals).